A 958-amino-acid polypeptide reads, in one-letter code: Glycine dehydrogenase (decarboxylating) (958 aa).

K708 carries the post-translational modification N6-(pyridoxal phosphate)lysine.

The protein belongs to the GcvP family. The glycine cleavage system is composed of four proteins: P, T, L and H. Pyridoxal 5'-phosphate is required as a cofactor.

It catalyses the reaction N(6)-[(R)-lipoyl]-L-lysyl-[glycine-cleavage complex H protein] + glycine + H(+) = N(6)-[(R)-S(8)-aminomethyldihydrolipoyl]-L-lysyl-[glycine-cleavage complex H protein] + CO2. The glycine cleavage system catalyzes the degradation of glycine. The P protein binds the alpha-amino group of glycine through its pyridoxal phosphate cofactor; CO(2) is released and the remaining methylamine moiety is then transferred to the lipoamide cofactor of the H protein. In Proteus mirabilis (strain HI4320), this protein is Glycine dehydrogenase (decarboxylating).